The primary structure comprises 161 residues: Endoribonuclease YbeY (161 aa).

Histidine 121, histidine 125, and histidine 131 together coordinate Zn(2+).

Belongs to the endoribonuclease YbeY family. The cofactor is Zn(2+).

The protein resides in the cytoplasm. Single strand-specific metallo-endoribonuclease involved in late-stage 70S ribosome quality control and in maturation of the 3' terminus of the 16S rRNA. This Stenotrophomonas maltophilia (strain R551-3) protein is Endoribonuclease YbeY.